A 207-amino-acid polypeptide reads, in one-letter code: Macrophage immunometabolism regulator (207 aa).

The residue at position 1 (Met1) is an N-acetylmethionine. The disordered stretch occupies residues 1-41 (MEVDVNGESRSALTTLPLPVAEASSPGKAEAEKPRCSSTPC). Residues Ser25, Ser140, and Ser167 each carry the phosphoserine modification.

This sequence belongs to the UNC119-binding protein family. In terms of assembly, interacts with UNC119 and UNC119B; interaction preferentially takes place when UNC119 and UNC119B are unliganded with myristoylated proteins.

It localises to the cytoplasm. It is found in the cell projection. Its subcellular location is the cilium. Its function is as follows. Regulates the macrophage function, by enhancing the resolution of inflammation and wound repair functions mediated by M2 macrophages. The regulation of macrophage function is, due at least in part, to its ability to inhibit glycolysis. May play also a role in trafficking of proteins via its interaction with UNC119 and UNC119B cargo adapters: may help the release of UNC119 and UNC119B cargo or the recycling of UNC119 and UNC119B. May play a role in ciliary membrane localization via its interaction with UNC119B and protein transport into photoreceptor cells. The sequence is that of Macrophage immunometabolism regulator (MACIR) from Bos taurus (Bovine).